The sequence spans 140 residues: Nucleoside diphosphate kinase (140 aa).

Lys11, Phe59, Arg87, Thr93, Arg104, and Asn114 together coordinate ATP. The Pros-phosphohistidine intermediate role is filled by His117.

This sequence belongs to the NDK family. In terms of assembly, homotetramer. Mg(2+) is required as a cofactor.

It is found in the cytoplasm. It carries out the reaction a 2'-deoxyribonucleoside 5'-diphosphate + ATP = a 2'-deoxyribonucleoside 5'-triphosphate + ADP. It catalyses the reaction a ribonucleoside 5'-diphosphate + ATP = a ribonucleoside 5'-triphosphate + ADP. Functionally, major role in the synthesis of nucleoside triphosphates other than ATP. The ATP gamma phosphate is transferred to the NDP beta phosphate via a ping-pong mechanism, using a phosphorylated active-site intermediate. The polypeptide is Nucleoside diphosphate kinase (Rickettsia typhi (strain ATCC VR-144 / Wilmington)).